Here is a 458-residue protein sequence, read N- to C-terminus: Exodeoxyribonuclease 7 large subunit (458 aa).

It belongs to the XseA family. Heterooligomer composed of large and small subunits.

The protein resides in the cytoplasm. The catalysed reaction is Exonucleolytic cleavage in either 5'- to 3'- or 3'- to 5'-direction to yield nucleoside 5'-phosphates.. In terms of biological role, bidirectionally degrades single-stranded DNA into large acid-insoluble oligonucleotides, which are then degraded further into small acid-soluble oligonucleotides. The chain is Exodeoxyribonuclease 7 large subunit from Geobacter sp. (strain M21).